Reading from the N-terminus, the 96-residue chain is C-C motif chemokine 20 (96 aa).

Positions 1–26 (MMCSSKNLLLAALMSVLLLHFCSKSE) are cleaved as a signal peptide. 2 disulfide bridges follow: Cys32–Cys58 and Cys33–Cys74.

This sequence belongs to the intercrine beta (chemokine CC) family.

It is found in the secreted. Acts as a ligand for C-C chemokine receptor CCR6. Signals through binding and activation of CCR6 and induces a strong chemotactic response and mobilization of intracellular calcium ions. The ligand-receptor pair CCL20-CCR6 is responsible for the chemotaxis of dendritic cells (DC), effector/memory T-cells and B-cells and plays an important role at skin and mucosal surfaces under homeostatic and inflammatory conditions, as well as in pathology, including cancer and autoimmune diseases. CCL20 acts as a chemotactic factor that attracts lymphocytes and, slightly, neutrophils, but not monocytes. Involved in the recruitment of both the pro-inflammatory IL17 producing helper T-cells (Th17) and the regulatory T-cells (Treg) to sites of inflammation. Required for optimal migration of thymic natural regulatory T cells (nTregs) and DN1 early thymocyte progenitor cells. Positively regulates sperm motility and chemotaxis via its binding to CCR6 which triggers Ca2+ mobilization in the sperm which is important for its motility. May be involved in formation and function of the mucosal lymphoid tissues by attracting lymphocytes and dendritic cells towards epithelial cells. In Bos taurus (Bovine), this protein is C-C motif chemokine 20 (CCL20).